Reading from the N-terminus, the 122-residue chain is Large ribosomal subunit protein uL14 (122 aa).

The protein belongs to the universal ribosomal protein uL14 family. Part of the 50S ribosomal subunit. Forms a cluster with proteins L3 and L19. In the 70S ribosome, L14 and L19 interact and together make contacts with the 16S rRNA in bridges B5 and B8.

Binds to 23S rRNA. Forms part of two intersubunit bridges in the 70S ribosome. The polypeptide is Large ribosomal subunit protein uL14 (Albidiferax ferrireducens (strain ATCC BAA-621 / DSM 15236 / T118) (Rhodoferax ferrireducens)).